We begin with the raw amino-acid sequence, 403 residues long: Ribosomal RNA large subunit methyltransferase I (403 aa).

Residues 9-88 form the PUA domain; sequence YPRLVLSKGR…ESIDIAFFTR (80 aa).

It belongs to the methyltransferase superfamily. RlmI family.

The protein localises to the cytoplasm. The catalysed reaction is cytidine(1962) in 23S rRNA + S-adenosyl-L-methionine = 5-methylcytidine(1962) in 23S rRNA + S-adenosyl-L-homocysteine + H(+). Specifically methylates the cytosine at position 1962 (m5C1962) of 23S rRNA. In Salmonella schwarzengrund (strain CVM19633), this protein is Ribosomal RNA large subunit methyltransferase I.